The following is a 526-amino-acid chain: Lycopene epsilon cyclase, chloroplastic (526 aa).

L108–P136 is an NAD(+) binding site. Helical transmembrane passes span F443 to F463 and F477 to I497.

Belongs to the lycopene cyclase family.

It localises to the plastid. The protein resides in the chloroplast membrane. The enzyme catalyses a carotenoid psi-end group = a carotenoid epsilon-end group. It functions in the pathway carotenoid biosynthesis; alpha-zeacarotene biosynthesis. The protein operates within carotenoid biosynthesis; delta-carotene biosynthesis. Catalyzes the single cyclization reaction which converts lycopene to delta-carotene and neurosporene to alpha-zeacarotene. Required for lutein biosynthesis. This chain is Lycopene epsilon cyclase, chloroplastic, found in Solanum lycopersicum (Tomato).